Reading from the N-terminus, the 423-residue chain is Histidine--tRNA ligase 2 (423 aa).

The protein belongs to the class-II aminoacyl-tRNA synthetase family. In terms of assembly, homodimer.

It localises to the cytoplasm. It catalyses the reaction tRNA(His) + L-histidine + ATP = L-histidyl-tRNA(His) + AMP + diphosphate + H(+). In Bacillus anthracis, this protein is Histidine--tRNA ligase 2.